The following is a 250-amino-acid chain: Kallikrein-9 (250 aa).

An N-terminal signal peptide occupies residues 1 to 15; sequence MKLGLLCALLSLLAG. Positions 23 to 249 constitute a Peptidase S1 domain; the sequence is AIGAEECRPN…YLDWIQEIME (227 aa). Disulfide bonds link cysteine 29/cysteine 164, cysteine 48/cysteine 64, cysteine 136/cysteine 238, cysteine 143/cysteine 210, cysteine 175/cysteine 189, and cysteine 200/cysteine 225. Catalysis depends on charge relay system residues histidine 63 and aspartate 111. 2 N-linked (GlcNAc...) asparagine glycosylation sites follow: asparagine 131 and asparagine 166. Residue serine 204 is the Charge relay system of the active site. Residue asparagine 211 is glycosylated (N-linked (GlcNAc...) asparagine).

It belongs to the peptidase S1 family. Kallikrein subfamily. Skin, thymus, trachea, cerebellum and spinal cord.

Its subcellular location is the secreted. This Homo sapiens (Human) protein is Kallikrein-9 (KLK9).